The sequence spans 220 residues: Ribonuclease P protein component 3 (220 aa).

This sequence belongs to the eukaryotic/archaeal RNase P protein component 3 family. In terms of assembly, consists of a catalytic RNA component and at least 4-5 protein subunits.

The protein resides in the cytoplasm. The catalysed reaction is Endonucleolytic cleavage of RNA, removing 5'-extranucleotides from tRNA precursor.. Its function is as follows. Part of ribonuclease P, a protein complex that generates mature tRNA molecules by cleaving their 5'-ends. The sequence is that of Ribonuclease P protein component 3 from Thermococcus kodakarensis (strain ATCC BAA-918 / JCM 12380 / KOD1) (Pyrococcus kodakaraensis (strain KOD1)).